We begin with the raw amino-acid sequence, 312 residues long: MNWMEVSIVINHEVQEFVTSILEENESNGVVIEDSKDLDGELADKFGEIYELDPNDYPDTGVRVKAYFNEIDYSEELKNQLLRNIQELAELDKNIFDYNEQIIKESDWENEWKNYFHPFKASKNFTIVPSWETYQKESDSELCIELDPGMAFGTGDHPTTSMCLNAIEQYVKPSDSVIDVGTGSGILSIACHLLGVRHIKAVDLDELAVRVAKENFEKNSCENAIETTTGNLLKGETNKYDVVIANILAHIIEEMIEDAYNTLNEEGRFITSGIIIEKSDEIIEHMKRVGFNIISINHDNGWACIVGEKVSN.

S-adenosyl-L-methionine-binding residues include threonine 160, glycine 181, aspartate 203, and asparagine 246.

It belongs to the methyltransferase superfamily. PrmA family.

It localises to the cytoplasm. It carries out the reaction L-lysyl-[protein] + 3 S-adenosyl-L-methionine = N(6),N(6),N(6)-trimethyl-L-lysyl-[protein] + 3 S-adenosyl-L-homocysteine + 3 H(+). In terms of biological role, methylates ribosomal protein L11. The protein is Ribosomal protein L11 methyltransferase of Staphylococcus carnosus (strain TM300).